The chain runs to 300 residues: UDP-N-acetylenolpyruvoylglucosamine reductase (300 aa).

In terms of domain architecture, FAD-binding PCMH-type spans 29-193 (TGGPADLLVF…LSATFKLRSG (165 aa)). R172 is a catalytic residue. The Proton donor role is filled by S222. The active site involves E292.

Belongs to the MurB family. FAD serves as cofactor.

It is found in the cytoplasm. The catalysed reaction is UDP-N-acetyl-alpha-D-muramate + NADP(+) = UDP-N-acetyl-3-O-(1-carboxyvinyl)-alpha-D-glucosamine + NADPH + H(+). It functions in the pathway cell wall biogenesis; peptidoglycan biosynthesis. Its function is as follows. Cell wall formation. This is UDP-N-acetylenolpyruvoylglucosamine reductase from Pediococcus pentosaceus (strain ATCC 25745 / CCUG 21536 / LMG 10740 / 183-1w).